A 503-amino-acid polypeptide reads, in one-letter code: MFYAHAFGGYDENLHAFPGISSTVANDVRKYSVVSVYNKKYNIVKNKYMWCNSQVNKRYIGALLPMFECNEYLQIGDPIHDLEGNQISIVTYRHKNYYALSGIGYESLDLCLEGVGIHHHVLETGNAVYGKVQHEYSTIKEKAKEMNALKPGPIIDYHVWIGDCVCQVTTVDVHGKEIMRMRFKRGAVLPIPNLVKVKVGEENDTINLSTSISALLNSGGGTIEVTSKEERVDYVLMKRLESIHHLWSVVYDHLNVVNGEERCYVHMHSSHQSPMLSTVKTNLYMKTMGACLQMDSMEALEYLSELKESGGRSPRPELQKFEYPDGVKDTESIERLAEEFFNRSELQAGESVKFGNSINVKHTSVSAKQLRTRIRQQLPSILSSFANTKGGYLFIGVDNNTHKVIGFTVGHDYLKLVESDIEKYIQKLPVVHFCKKKEDIKYACRFIKVYKPGDETTSTYVCAIKVERCCCAVFADWPESWYMDTSGSMKKYSPDEWVSHIKF.

Catalysis depends on His15, which acts as the Proton donor. Tyr136 serves as the catalytic Shared with catalytic histidine of dimeric partner. The active-site Proton acceptor; shared with catalytic histidine of dimeric partner is the Lys140.

This sequence in the N-terminal section; belongs to the poxin family. In the C-terminal section; belongs to the Schlafen protein family. Subgroup poxviridae B3 subfamily. In terms of assembly, homodimer.

It carries out the reaction 2',3'-cGAMP + H2O = Gp(2'-5')Ap(3') + H(+). Its function is as follows. Nuclease that is responsible for viral evasion of host cGAS-STING innate immunity. Cleaves 2',3'-cGAMP which is produced by host cGAS following recognition of cytosolic DNA and blocks the subsequent 2',3'-cGAMP-mediated activation of TMEM173/STING, which normally spreads to adjacent cells and activates the interferon and NF-kappa-B immune responses. This Cynomys gunnisoni (Gunnison's prairie dog) protein is Poxin-Schlafen (OPG188).